Consider the following 142-residue polypeptide: Large ribosomal subunit protein uL11 (142 aa).

It belongs to the universal ribosomal protein uL11 family. In terms of assembly, part of the ribosomal stalk of the 50S ribosomal subunit. Interacts with L10 and the large rRNA to form the base of the stalk. L10 forms an elongated spine to which L12 dimers bind in a sequential fashion forming a multimeric L10(L12)X complex. Post-translationally, one or more lysine residues are methylated.

In terms of biological role, forms part of the ribosomal stalk which helps the ribosome interact with GTP-bound translation factors. The sequence is that of Large ribosomal subunit protein uL11 from Mesoplasma florum (strain ATCC 33453 / NBRC 100688 / NCTC 11704 / L1) (Acholeplasma florum).